Consider the following 429-residue polypeptide: tRNA-2-methylthio-N(6)-dimethylallyladenosine synthase (429 aa).

Positions 1-110 (MKFFIKTYGC…IPEAVELSIK (110 aa)) constitute an MTTase N-terminal domain. Residues Cys10, Cys46, Cys75, Cys146, Cys150, and Cys153 each contribute to the [4Fe-4S] cluster site. The region spanning 132–364 (RNSKHHAWIT…NLQKEINKML (233 aa)) is the Radical SAM core domain. The 62-residue stretch at 366–427 (ESYLDKTVEV…AGPLYGDIIK (62 aa)) folds into the TRAM domain.

This sequence belongs to the methylthiotransferase family. MiaB subfamily. Monomer. [4Fe-4S] cluster is required as a cofactor.

It localises to the cytoplasm. The catalysed reaction is N(6)-dimethylallyladenosine(37) in tRNA + (sulfur carrier)-SH + AH2 + 2 S-adenosyl-L-methionine = 2-methylsulfanyl-N(6)-dimethylallyladenosine(37) in tRNA + (sulfur carrier)-H + 5'-deoxyadenosine + L-methionine + A + S-adenosyl-L-homocysteine + 2 H(+). Functionally, catalyzes the methylthiolation of N6-(dimethylallyl)adenosine (i(6)A), leading to the formation of 2-methylthio-N6-(dimethylallyl)adenosine (ms(2)i(6)A) at position 37 in tRNAs that read codons beginning with uridine. This chain is tRNA-2-methylthio-N(6)-dimethylallyladenosine synthase, found in Thermosipho africanus (strain TCF52B).